Consider the following 66-residue polypeptide: Large ribosomal subunit protein bL33c (66 aa).

The protein belongs to the bacterial ribosomal protein bL33 family.

The protein localises to the plastid. Its subcellular location is the chloroplast. The protein is Large ribosomal subunit protein bL33c of Ceratophyllum demersum (Rigid hornwort).